The primary structure comprises 390 residues: MAAVAARAGGLLRLGAAGAERRRRGLRCAALVQGFLQPAVDDASQKRRVAHFTFQPDPESLQYGQTQKMNLFQSITSALDNSLAKDPTAVIFGEDVAFGGVFRCTVGLRDKYGKDRVFNTPLCEQGIVGFGIGIAVTGATAIAEIQFADYIFPAFDQIVNEAAKYRYRSGDLFNCGSLTIRAPWGCVGHGALYHSQSPEAFFAHCPGIKVVIPRSPFQAKGLLLSCIEDKNPCIFFEPKILYRAAVEQVPVEPYKIPLSQAEVIQEGSDVTLVAWGTQVHVIREVASMAQEKLGVSCEVIDLRTIVPWDVDTVCKSVIKTGRLLISHEAPLTGGFASEISSTVQEECFLNLEAPISRVCGYDTPFPHIFEPFYIPDKWKCYDALRKMINY.

Residues 1–48 (MAAVAARAGGLLRLGAAGAERRRRGLRCAALVQGFLQPAVDDASQKRR) constitute a mitochondrion transit peptide. Tyr150 serves as a coordination point for thiamine diphosphate. K(+) is bound by residues Gly176, Leu178, Thr179, Cys226, and Asp229. Lys230 is modified (N6-acetyllysine). Asn231 contacts K(+). Lys239 carries the post-translational modification N6-acetyllysine.

In terms of assembly, heterotetramer of 2 alpha/BCKDHA and 2 beta chains/BCKDHB that forms the branched-chain alpha-keto acid decarboxylase (E1) component of the BCKD complex. The branched-chain alpha-ketoacid dehydrogenase is a large complex composed of three major building blocks E1, E2 and E3. It is organized around E2, a 24-meric cubic core composed of DBT, to which are associated 6 to 12 copies of E1, and approximately 6 copies of the dehydrogenase E3, a DLD dimer. Thiamine diphosphate is required as a cofactor.

The protein localises to the mitochondrion matrix. The catalysed reaction is N(6)-[(R)-lipoyl]-L-lysyl-[protein] + 3-methyl-2-oxobutanoate + H(+) = N(6)-[(R)-S(8)-2-methylpropanoyldihydrolipoyl]-L-lysyl-[protein] + CO2. Its function is as follows. Together with BCKDHA forms the heterotetrameric E1 subunit of the mitochondrial branched-chain alpha-ketoacid dehydrogenase (BCKD) complex. The BCKD complex catalyzes the multi-step oxidative decarboxylation of alpha-ketoacids derived from the branched-chain amino-acids valine, leucine and isoleucine producing CO2 and acyl-CoA which is subsequently utilized to produce energy. The E1 subunit catalyzes the first step with the decarboxylation of the alpha-ketoacid forming an enzyme-product intermediate. A reductive acylation mediated by the lipoylamide cofactor of E2 extracts the acyl group from the E1 active site for the next step of the reaction. The chain is 2-oxoisovalerate dehydrogenase subunit beta, mitochondrial from Rattus norvegicus (Rat).